The primary structure comprises 286 residues: Pyridoxal kinase PdxY (286 aa).

Substrate-binding positions include Ser-9 and 44-45 (MQ). 3 residues coordinate ATP: Asp-111, Glu-147, and Lys-180. Asp-221 provides a ligand contact to substrate.

This sequence belongs to the pyridoxine kinase family. PdxY subfamily. As to quaternary structure, homodimer. The cofactor is Mg(2+).

The enzyme catalyses pyridoxal + ATP = pyridoxal 5'-phosphate + ADP + H(+). It functions in the pathway cofactor metabolism; pyridoxal 5'-phosphate salvage; pyridoxal 5'-phosphate from pyridoxal: step 1/1. Functionally, pyridoxal kinase involved in the salvage pathway of pyridoxal 5'-phosphate (PLP). Catalyzes the phosphorylation of pyridoxal to PLP. The chain is Pyridoxal kinase PdxY from Burkholderia orbicola (strain AU 1054).